The chain runs to 492 residues: Glycerol kinase (492 aa).

ADP is bound at residue Thr11. ATP-binding residues include Thr11 and Thr12. Thr11 contacts sn-glycerol 3-phosphate. Position 15 (Lys15) interacts with ADP. Residues Arg79, Glu80, Tyr129, and Asp238 each contribute to the sn-glycerol 3-phosphate site. The glycerol site is built by Arg79, Glu80, Tyr129, Asp238, and Gln239. Thr260, Gly302, Gly403, and Asn407 together coordinate ADP. Residues Thr260, Gly302, and Gly403 each contribute to the ATP site.

It belongs to the FGGY kinase family.

It carries out the reaction glycerol + ATP = sn-glycerol 3-phosphate + ADP + H(+). It functions in the pathway polyol metabolism; glycerol degradation via glycerol kinase pathway; sn-glycerol 3-phosphate from glycerol: step 1/1. With respect to regulation, inhibited by fructose 1,6-bisphosphate (FBP). Key enzyme in the regulation of glycerol uptake and metabolism. Catalyzes the phosphorylation of glycerol to yield sn-glycerol 3-phosphate. This chain is Glycerol kinase, found in Aquifex aeolicus (strain VF5).